Consider the following 296-residue polypeptide: Ribose import binding protein RbsB (296 aa).

Positions 1-25 (MNMKKLATLVSAVALSATVSANAMA) are cleaved as a signal peptide.

It belongs to the bacterial solute-binding protein 2 family. In terms of assembly, the complex is composed of an ATP-binding protein (RbsA), two transmembrane proteins (RbsC) and a solute-binding protein (RbsB).

The protein localises to the periplasm. Part of the ABC transporter complex RbsABC involved in ribose import. Binds ribose. Also serves as the primary chemoreceptor for chemotaxis. The sequence is that of Ribose import binding protein RbsB from Escherichia coli (strain K12).